A 326-amino-acid polypeptide reads, in one-letter code: Malate dehydrogenase (326 aa).

An NAD(+)-binding site is contributed by G11–G17. Positions 92 and 98 each coordinate substrate. NAD(+) is bound by residues N105, Q112, and V129–N131. Substrate-binding residues include N131 and R162. H187 (proton acceptor) is an active-site residue.

This sequence belongs to the LDH/MDH superfamily. MDH type 2 family.

The catalysed reaction is (S)-malate + NAD(+) = oxaloacetate + NADH + H(+). Its function is as follows. Catalyzes the reversible oxidation of malate to oxaloacetate. This chain is Malate dehydrogenase, found in Halorhodospira halophila (strain DSM 244 / SL1) (Ectothiorhodospira halophila (strain DSM 244 / SL1)).